The chain runs to 653 residues: Macrolide export ATP-binding/permease protein MacB (653 aa).

Residues Leu-6–Pro-244 form the ABC transporter domain. ATP is bound at residue Gly-42–Ser-49. The next 4 membrane-spanning stretches (helical) occupy residues Phe-277–Gly-297, Leu-526–Met-546, Leu-587–Leu-607, and Phe-617–Pro-637.

This sequence belongs to the ABC transporter superfamily. Macrolide exporter (TC 3.A.1.122) family. As to quaternary structure, homodimer.

The protein resides in the cell inner membrane. Functionally, non-canonical ABC transporter that contains transmembrane domains (TMD), which form a pore in the inner membrane, and an ATP-binding domain (NBD), which is responsible for energy generation. Confers resistance against macrolides. The sequence is that of Macrolide export ATP-binding/permease protein MacB from Bradyrhizobium diazoefficiens (strain JCM 10833 / BCRC 13528 / IAM 13628 / NBRC 14792 / USDA 110).